Consider the following 910-residue polypeptide: Dynein axonemal assembly factor 1 homolog (910 aa).

5 LRR repeats span residues 43–64 (GLKC…DHQS), 65–86 (QLRC…QHCK), 87–108 (QLDT…GSDI), 111–132 (VLNT…AELR), and 136–157 (FVSV…KVLA). Positions 171–209 (PVVNDIPSYRKTLILECKSLTYLDSRPVFDKDRACAEAW) constitute an LRRCT domain. The segment covering 217-230 (ERKEHQRWKKEEQR) has biased composition (basic and acidic residues). Disordered stretches follow at residues 217–275 (ERKE…GDFE), 297–332 (TKGD…DPTL), 344–399 (SRAC…GSIL), 620–642 (EQVP…PVDQ), 662–682 (QVEV…IPEE), and 855–910 (EELE…QGDH). A compositionally biased stretch (polar residues) spans 314 to 331 (STNSVDYITGSDSNSDPT). Residues 380–389 (SLSDSSSSSS) show a composition bias toward low complexity. The span at 620–633 (EQVPDEVEANDKAS) shows a compositional bias: basic and acidic residues. Acidic residues predominate over residues 855-865 (EELEELNEEED). The span at 866 to 878 (PALKEAGDFKHDE) shows a compositional bias: basic and acidic residues.

It belongs to the DNAAF1 family.

The protein resides in the cell projection. It localises to the cilium. Functionally, cilium-specific protein required for cilia structures. The polypeptide is Dynein axonemal assembly factor 1 homolog (Anopheles gambiae (African malaria mosquito)).